The chain runs to 121 residues: uncharacterized protein (121 aa).

The chain crosses the membrane as a helical span at residues 6 to 26 (ITTASILLVVIVAFCAAAPMI).

The protein resides in the membrane. This is an uncharacterized protein from Caenorhabditis elegans.